The sequence spans 146 residues: Leghemoglobin-3 (146 aa).

Positions Gly-2–Val-146 constitute a Globin domain. Nitrated tyrosine is present on Tyr-29. Position 44 (Ser-44) interacts with heme b. The residue at position 44 (Ser-44) is a Phosphoserine. Residue His-61 participates in O2 binding. 3 residues coordinate heme b: Lys-64, His-93, and Lys-96. Nitrated tyrosine is present on Tyr-134.

Belongs to the plant globin family. As to quaternary structure, monomer. Post-translationally, nitrated in effective nodules and particularly in hypoxic conditions; this mechanism may play a protective role in the symbiosis by buffering toxic peroxynitrite NO(2)(-). Nitration level decrease during nodule senescence. Phosphorylation at Ser-44 disrupts the molecular environment of its porphyrin ring oxygen binding pocket, thus leading to a reduced oxygen consumption and to the delivery of oxygen O(2) to symbiosomes. Root nodules.

The protein localises to the cytoplasm. Its subcellular location is the cytosol. It localises to the nucleus. Its function is as follows. Leghemoglobin that reversibly binds oxygen O(2) through a pentacoordinated heme iron. In root nodules, facilitates the diffusion of oxygen to the bacteroids while preventing the bacterial nitrogenase from being inactivated by buffering dioxygen, nitric oxide and carbon monoxide, and promoting the formation of reactive oxygen species (ROS, e.g. H(2)O(2)). This role is essential for symbiotic nitrogen fixation (SNF). The protein is Leghemoglobin-3 of Medicago sativa (Alfalfa).